A 446-amino-acid chain; its full sequence is Minor teichoic acid biosynthesis protein GgaA (446 aa).

Belongs to the glycosyltransferase 2 family.

It participates in cell wall biogenesis; poly(glucopyranosyl N-acetylgalactosamine 1-phosphate) teichoic acid biosynthesis. Its function is as follows. Involved in the biosynthesis of galactosamine-containing minor teichoic acid, a non-essential cell wall polymer in B.subtilis 168. The polypeptide is Minor teichoic acid biosynthesis protein GgaA (ggaA) (Bacillus subtilis (strain 168)).